The primary structure comprises 173 residues: Crossover junction endodeoxyribonuclease RuvC (173 aa).

Catalysis depends on residues aspartate 8, glutamate 67, and aspartate 139. Aspartate 8, glutamate 67, and aspartate 139 together coordinate Mg(2+).

Belongs to the RuvC family. Homodimer which binds Holliday junction (HJ) DNA. The HJ becomes 2-fold symmetrical on binding to RuvC with unstacked arms; it has a different conformation from HJ DNA in complex with RuvA. In the full resolvosome a probable DNA-RuvA(4)-RuvB(12)-RuvC(2) complex forms which resolves the HJ. Requires Mg(2+) as cofactor.

It is found in the cytoplasm. It carries out the reaction Endonucleolytic cleavage at a junction such as a reciprocal single-stranded crossover between two homologous DNA duplexes (Holliday junction).. The RuvA-RuvB-RuvC complex processes Holliday junction (HJ) DNA during genetic recombination and DNA repair. Endonuclease that resolves HJ intermediates. Cleaves cruciform DNA by making single-stranded nicks across the HJ at symmetrical positions within the homologous arms, yielding a 5'-phosphate and a 3'-hydroxyl group; requires a central core of homology in the junction. The consensus cleavage sequence is 5'-(A/T)TT(C/G)-3'. Cleavage occurs on the 3'-side of the TT dinucleotide at the point of strand exchange. HJ branch migration catalyzed by RuvA-RuvB allows RuvC to scan DNA until it finds its consensus sequence, where it cleaves and resolves the cruciform DNA. The polypeptide is Crossover junction endodeoxyribonuclease RuvC (Klebsiella pneumoniae (strain 342)).